The primary structure comprises 91 residues: Insertion element IS1 7 protein InsA (91 aa).

Belongs to the IS1 elements InsA family.

In terms of biological role, absolutely required for transposition of IS1. This Escherichia coli (strain K12) protein is Insertion element IS1 7 protein InsA (insA7).